Consider the following 238-residue polypeptide: SPEG neighbor protein (238 aa).

Residues 29 to 55 (QSAAIRIQASYRGHRSRKELREKGPPR) form the IQ domain. 2 consecutive Ig-like domains span residues 54–143 (PRVL…ARIL) and 147–236 (PTKI…ARVD).

The chain is SPEG neighbor protein from Homo sapiens (Human).